A 148-amino-acid chain; its full sequence is MFHRPVLQVFRQFARCQSTDSLSAILERSMNKVQLLGRVGQDPVMRQADGKNPVTIFSLATNELWRSGENEVFQPAGDVNQKTTWHRVSVFRPGLRDVAYQHVKKGARLLVEGKIDYGEYTDKNNVRRQATTIIADNIIFLTDLRDKP.

A mitochondrion-targeting transit peptide spans 1 to 17 (MFHRPVLQVFRQFARCQ). Positions 30–142 (MNKVQLLGRV…IIADNIIFLT (113 aa)) constitute an SSB domain.

As to quaternary structure, homotetramer.

The protein localises to the mitochondrion. The protein resides in the mitochondrion matrix. It localises to the mitochondrion nucleoid. In terms of biological role, binds preferentially and cooperatively to pyrimidine rich single-stranded DNA (ss-DNA). Required to maintain the copy number of mitochondrial DNA (mtDNA) and plays crucial roles during mtDNA replication that stimulate activity of the DNA polymerase at the replication fork. May also function in mtDNA repair. This chain is Single-stranded DNA-binding protein 1-B, mitochondrial (ssbp1-b), found in Xenopus laevis (African clawed frog).